A 781-amino-acid polypeptide reads, in one-letter code: uncharacterized protein (781 aa).

A disordered region spans residues 1–34; it reads MNIAEEPSDEVISSGPEDTDICSQQTSASAEAGD. At serine 29 the chain carries Phosphoserine. RRM domains follow at residues 195-273 and 295-418; these read GNIF…YHVE and RCLF…KAVQ. The segment at 345–375 is disordered; the sequence is SNTRSSSSVSFNEEGSVESNKSSNNTNGNAQ. Residues 347 to 364 are compositionally biased toward low complexity; it reads TRSSSSVSFNEEGSVESN. Over residues 365–374 the composition is skewed to polar residues; the sequence is KSSNNTNGNA. Phosphoserine is present on residues serine 433, serine 435, serine 482, and serine 485. The residue at position 486 (threonine 486) is a Phosphothreonine. A Phosphoserine modification is found at serine 501. The RRM 3 domain maps to 540-638; the sequence is SNLYVKHIPL…QVLSVSFAQK (99 aa). Positions 640–668 are disordered; it reads GNLSSSDDDDQSQTDNSSKFQNFQPHNDY.

Interacts with RBG1.

This is an uncharacterized protein from Saccharomyces cerevisiae (strain ATCC 204508 / S288c) (Baker's yeast).